A 297-amino-acid polypeptide reads, in one-letter code: Thiosulfate sulfurtransferase (297 aa).

N6-acetyllysine; alternate is present on Lys14. Lys14 carries the N6-succinyllysine; alternate modification. The Rhodanese 1 domain occupies Val25–Ser143. An O-linked (GlcNAc) serine glycan is attached at Ser35. The residue at position 38 (Ser38) is a Phosphoserine. The residue at position 136 (Lys136) is an N6-acetyllysine; alternate. Position 136 is an N6-succinyllysine; alternate (Lys136). The hinge stretch occupies residues Glu144 to Arg159. Lys163 carries the post-translational modification N6-acetyllysine. Positions Gln173–Arg288 constitute a Rhodanese 2 domain. Lys175 bears the N6-acetyllysine; alternate mark. Lys175 is subject to N6-succinyllysine; alternate. A substrate-binding site is contributed by Arg187. Lys224 carries the N6-acetyllysine; alternate modification. Lys224 is subject to N6-succinyllysine; alternate. Lys236 is subject to N6-acetyllysine. Residue Lys237 is modified to N6-acetyllysine; alternate. The residue at position 237 (Lys237) is an N6-succinyllysine; alternate. The active-site Cysteine persulfide intermediate is the Cys248. Position 250 (Lys250) interacts with substrate.

In terms of assembly, monomer. In terms of tissue distribution, expressed in numerous tissues.

It localises to the mitochondrion matrix. It carries out the reaction thiosulfate + hydrogen cyanide = thiocyanate + sulfite + 2 H(+). Functionally, together with MRPL18, acts as a mitochondrial import factor for the cytosolic 5S rRNA. Only the nascent unfolded cytoplasmic form is able to bind to the 5S rRNA. Involved in the formation of iron-sulfur complexes, cyanide detoxification or modification of sulfur-containing enzymes. Other thiol compounds, besides cyanide, can act as sulfur ion acceptors. Also has weak mercaptopyruvate sulfurtransferase (MST) activity. This is Thiosulfate sulfurtransferase (Tst) from Rattus norvegicus (Rat).